The following is a 130-amino-acid chain: Small ribosomal subunit protein eS6 (130 aa).

The interval 78–98 (SGPPGFRPERKGERRRKTVRG) is disordered.

Belongs to the eukaryotic ribosomal protein eS6 family.

This is Small ribosomal subunit protein eS6 from Methanopyrus kandleri (strain AV19 / DSM 6324 / JCM 9639 / NBRC 100938).